A 111-amino-acid chain; its full sequence is Fertilization-influencing membrane protein (111 aa).

The first 23 residues, 1-23, serve as a signal peptide directing secretion; the sequence is MKLWLWVAVGVWMLMAELGTIET. Residues 85–105 form a helical membrane-spanning segment; the sequence is ILVGTLVVAFFFLLFQFCLHV.

Testis-specific.

It is found in the cell membrane. It localises to the secreted. In terms of biological role, plays a role in sperm-oocyte fusion process during fertilization. This is Fertilization-influencing membrane protein from Mus musculus (Mouse).